The chain runs to 213 residues: Glycerol-3-phosphate acyltransferase (213 aa).

The next 5 helical transmembrane spans lie at 3–23, 51–71, 78–98, 115–135, and 140–160; these read ILLA…VVVS, KAAI…VWLA, DVAV…PVFF, AVHP…AFFF, and LAAL…FGTP.

The protein belongs to the PlsY family. As to quaternary structure, probably interacts with PlsX.

The protein resides in the cell inner membrane. It catalyses the reaction an acyl phosphate + sn-glycerol 3-phosphate = a 1-acyl-sn-glycero-3-phosphate + phosphate. It participates in lipid metabolism; phospholipid metabolism. In terms of biological role, catalyzes the transfer of an acyl group from acyl-phosphate (acyl-PO(4)) to glycerol-3-phosphate (G3P) to form lysophosphatidic acid (LPA). This enzyme utilizes acyl-phosphate as fatty acyl donor, but not acyl-CoA or acyl-ACP. This is Glycerol-3-phosphate acyltransferase from Burkholderia cenocepacia (strain ATCC BAA-245 / DSM 16553 / LMG 16656 / NCTC 13227 / J2315 / CF5610) (Burkholderia cepacia (strain J2315)).